Reading from the N-terminus, the 544-residue chain is Probable protein kinase UbiB (544 aa).

Residues 123 to 505 (EFDEQALASA…GRQKSHNVRS (383 aa)) form the Protein kinase domain. Residues 129 to 137 (LASASIAQV) and lysine 156 each bind ATP. Aspartate 291 functions as the Proton acceptor in the catalytic mechanism. Residues 522 to 540 (LPLWLSCGTLVTVLLVLLL) form a helical membrane-spanning segment.

This sequence belongs to the ABC1 family. UbiB subfamily.

It localises to the cell inner membrane. It functions in the pathway cofactor biosynthesis; ubiquinone biosynthesis [regulation]. In terms of biological role, is probably a protein kinase regulator of UbiI activity which is involved in aerobic coenzyme Q (ubiquinone) biosynthesis. This is Probable protein kinase UbiB from Actinobacillus pleuropneumoniae serotype 5b (strain L20).